Consider the following 144-residue polypeptide: Maximins z/Hv (144 aa).

An N-terminal signal peptide occupies residues 1–18; sequence MNFKYIVAVSFLIASGYA. Positions 19–43 are excised as a propeptide; it reads RSEENDVQSLSQREVLEEESLREIR. Asn-70 carries the asparagine amide modification. Positions 74-123 are excised as a propeptide; that stretch reads TAEDHEVMKRLKAVMRDLDSLDHPEEASERETRGFNQEEIANLFTKKEKR. Ile-143 is modified (isoleucine amide).

The protein belongs to the bombinin family. Expressed by the skin glands.

It is found in the secreted. Functionally, maximin-z shows antimicrobial activity against bacteria and against the fungus C.albicans. It has little hemolytic activity. In terms of biological role, maximin-Hv shows antimicrobial activity against bacteria and against the fungus C.albicans. Shows strong hemolytic activity. The chain is Maximins z/Hv from Bombina maxima (Giant fire-bellied toad).